We begin with the raw amino-acid sequence, 209 residues long: Ribosomal RNA large subunit methyltransferase E (209 aa).

S-adenosyl-L-methionine contacts are provided by G63, W65, D83, D99, and D124. K164 functions as the Proton acceptor in the catalytic mechanism.

It belongs to the class I-like SAM-binding methyltransferase superfamily. RNA methyltransferase RlmE family.

It localises to the cytoplasm. It carries out the reaction uridine(2552) in 23S rRNA + S-adenosyl-L-methionine = 2'-O-methyluridine(2552) in 23S rRNA + S-adenosyl-L-homocysteine + H(+). In terms of biological role, specifically methylates the uridine in position 2552 of 23S rRNA at the 2'-O position of the ribose in the fully assembled 50S ribosomal subunit. The polypeptide is Ribosomal RNA large subunit methyltransferase E (Photobacterium profundum (strain SS9)).